Consider the following 139-residue polypeptide: Diuretic hormone 41 (139 aa).

A signal peptide spans 1–20 (MMWWALWCAVVVAAGSGVAA). A propeptide spanning residues 21-79 (APAPDSLSPLDMVQMDSSAPDDETLYAMSPMAARYSAGAPWLYLLADMPRDSQTGSGRV) is cleaved from the precursor. Isoleucine amide is present on I122.

It belongs to the sauvagine/corticotropin-releasing factor/urotensin I family. As to expression, expressed in corpora cardiaca (CC), corpora allata (CA), antennal lobe (AL) and gnathal ganglion (GNG) (at protein level). Expression in CC and CA detected in all animals, in GNG in most animals, expression in AL detected in few animals (at protein level).

Its subcellular location is the secreted. In terms of biological role, regulation of fluid secretion. This chain is Diuretic hormone 41, found in Agrotis ipsilon (Black cutworm moth).